A 350-amino-acid polypeptide reads, in one-letter code: UDP-3-O-acylglucosamine N-acyltransferase (350 aa).

Histidine 240 acts as the Proton acceptor in catalysis.

Belongs to the transferase hexapeptide repeat family. LpxD subfamily. As to quaternary structure, homotrimer.

The catalysed reaction is a UDP-3-O-[(3R)-3-hydroxyacyl]-alpha-D-glucosamine + a (3R)-hydroxyacyl-[ACP] = a UDP-2-N,3-O-bis[(3R)-3-hydroxyacyl]-alpha-D-glucosamine + holo-[ACP] + H(+). The protein operates within bacterial outer membrane biogenesis; LPS lipid A biosynthesis. Functionally, catalyzes the N-acylation of UDP-3-O-acylglucosamine using 3-hydroxyacyl-ACP as the acyl donor. Is involved in the biosynthesis of lipid A, a phosphorylated glycolipid that anchors the lipopolysaccharide to the outer membrane of the cell. The polypeptide is UDP-3-O-acylglucosamine N-acyltransferase (Methylobacillus flagellatus (strain ATCC 51484 / DSM 6875 / VKM B-1610 / KT)).